Here is a 320-residue protein sequence, read N- to C-terminus: uncharacterized protein (320 aa).

The next 7 helical transmembrane spans lie at 24-44 (FEFS…IFFI), 65-85 (FVLS…LWSL), 105-125 (TTSC…FIVV), 132-152 (SWFV…IAIL), 179-199 (ISLT…IYTF), 226-246 (MIPI…YFGY), and 253-275 (TSRW…MLSL).

It localises to the membrane. This is an uncharacterized protein from Caenorhabditis elegans.